The primary structure comprises 245 residues: Demethylmenaquinone methyltransferase (245 aa).

S-adenosyl-L-methionine contacts are provided by residues T70, D90, and 118 to 119; that span reads DC.

It belongs to the class I-like SAM-binding methyltransferase superfamily. MenG/UbiE family.

The enzyme catalyses a 2-demethylmenaquinol + S-adenosyl-L-methionine = a menaquinol + S-adenosyl-L-homocysteine + H(+). It participates in quinol/quinone metabolism; menaquinone biosynthesis; menaquinol from 1,4-dihydroxy-2-naphthoate: step 2/2. In terms of biological role, methyltransferase required for the conversion of demethylmenaquinol (DMKH2) to menaquinol (MKH2). This is Demethylmenaquinone methyltransferase from Bacteroides fragilis (strain ATCC 25285 / DSM 2151 / CCUG 4856 / JCM 11019 / LMG 10263 / NCTC 9343 / Onslow / VPI 2553 / EN-2).